A 239-amino-acid chain; its full sequence is 2-C-methyl-D-erythritol 4-phosphate cytidylyltransferase (239 aa).

This sequence belongs to the IspD/TarI cytidylyltransferase family. IspD subfamily.

The catalysed reaction is 2-C-methyl-D-erythritol 4-phosphate + CTP + H(+) = 4-CDP-2-C-methyl-D-erythritol + diphosphate. It functions in the pathway isoprenoid biosynthesis; isopentenyl diphosphate biosynthesis via DXP pathway; isopentenyl diphosphate from 1-deoxy-D-xylulose 5-phosphate: step 2/6. Catalyzes the formation of 4-diphosphocytidyl-2-C-methyl-D-erythritol from CTP and 2-C-methyl-D-erythritol 4-phosphate (MEP). The chain is 2-C-methyl-D-erythritol 4-phosphate cytidylyltransferase from Acinetobacter baylyi (strain ATCC 33305 / BD413 / ADP1).